The sequence spans 784 residues: Toll-like receptor 2 (784 aa).

The signal sequence occupies residues methionine 1–glycine 20. At alanine 21 to arginine 587 the chain is on the extracellular side. The cysteines at positions 30 and 36 are disulfide-linked. LRR repeat units follow at residues valine 54 to asparagine 77, leucine 78 to asparagine 101, leucine 102 to alanine 125, leucine 126 to asparagine 150, leucine 151 to phenylalanine 175, leucine 176 to asparagine 199, isoleucine 200 to serine 223, leucine 224 to serine 250, valine 251 to glycine 278, isoleucine 279 to asparagine 308, valine 309 to lysine 337, valine 338 to serine 361, leucine 362 to phenylalanine 388, leucine 389 to asparagine 414, leucine 415 to lysine 437, methionine 438 to glutamine 457, threonine 458 to glutamine 478, leucine 479 to valine 500, and leucine 501 to glutamine 524. Asparagine 114 is a glycosylation site (N-linked (GlcNAc...) asparagine). Residue asparagine 199 is glycosylated (N-linked (GlcNAc...) asparagine). Asparagine 248 carries N-linked (GlcNAc...) asparagine glycosylation. An intrachain disulfide couples cysteine 353 to cysteine 382. Residues cysteine 432 and cysteine 454 are joined by a disulfide bond. The N-linked (GlcNAc...) asparagine glycan is linked to asparagine 442. Residues leucine 525 to arginine 579 enclose the LRRCT domain. A helical membrane pass occupies residues alanine 588–leucine 608. Residues cysteine 609 to serine 784 lie on the Cytoplasmic side of the membrane. One can recognise a TIR domain in the interval isoleucine 639–isoleucine 782. Lysine 754 is covalently cross-linked (Glycyl lysine isopeptide (Lys-Gly) (interchain with G-Cter in ubiquitin)). An ATG16L1-binding motif motif is present at residues tyrosine 761 to leucine 778.

It belongs to the Toll-like receptor family. In terms of assembly, interacts with LY96, TLR1 and TLR6 (via extracellular domain). TLR2 seems to exist in heterodimers with either TLR1 or TLR6 before stimulation by the ligand. The heterodimers form bigger oligomers in response to their corresponding ligands as well as further heterotypic associations with other receptors such as CD14 and/or CD36. Binds MYD88 (via TIR domain). Interacts with TICAM1. Interacts with CNPY3. Interacts with ATG16L1. Interacts with PPP1R11. Interacts with TICAM2. Interacts with TIRAP. Ubiquitinated at Lys-754 by PPP1R11, leading to its degradation. Deubiquitinated by USP2. Post-translationally, glycosylation of Asn-442 is critical for secretion of the N-terminal ectodomain of TLR2.

It localises to the membrane. Its subcellular location is the cytoplasmic vesicle. The protein localises to the phagosome membrane. It is found in the membrane raft. Functionally, cooperates with LY96 to mediate the innate immune response to bacterial lipoproteins and other microbial cell wall components. Cooperates with TLR1 or TLR6 to mediate the innate immune response to bacterial lipoproteins or lipopeptides. Acts via MYD88 and TRAF6, leading to NF-kappa-B activation, cytokine secretion and the inflammatory response. May also promote apoptosis in response to lipoproteins. Forms activation clusters composed of several receptors depending on the ligand, these clusters trigger signaling from the cell surface and subsequently are targeted to the Golgi in a lipid-raft dependent pathway. Forms the cluster TLR2:TLR6:CD14:CD36 in response to diacylated lipopeptides and TLR2:TLR1:CD14 in response to triacylated lipopeptides. This Bubalus bubalis (Domestic water buffalo) protein is Toll-like receptor 2 (TLR2).